Here is a 237-residue protein sequence, read N- to C-terminus: Proteasome subunit beta type-1 (237 aa).

It belongs to the peptidase T1B family. The 26S proteasome consists of a 20S proteasome core and two 19S regulatory subunits. The 20S proteasome core is a barrel-shaped complex made of 28 subunits that are arranged in four stacked rings. The two outer rings are each formed by seven alpha subunits, and the two inner rings are formed by seven beta subunits. The proteolytic activity is exerted by three beta-subunits psmb5, psmb6 and psmb7.

Its subcellular location is the cytoplasm. The protein resides in the nucleus. Non-catalytic component of the 20S core proteasome complex involved in the proteolytic degradation of most intracellular proteins. This complex plays numerous essential roles within the cell by associating with different regulatory particles. Associated with two 19S regulatory particles, forms the 26S proteasome and thus participates in the ATP-dependent degradation of ubiquitinated proteins. The 26S proteasome plays a key role in the maintenance of protein homeostasis by removing misfolded or damaged proteins that could impair cellular functions, and by removing proteins whose functions are no longer required. Associated with the PA200 or PA28, the 20S proteasome mediates ubiquitin-independent protein degradation. This is Proteasome subunit beta type-1 from Danio rerio (Zebrafish).